Here is a 225-residue protein sequence, read N- to C-terminus: Uracil-DNA glycosylase (225 aa).

The active-site Proton acceptor is Asp65.

The protein belongs to the uracil-DNA glycosylase (UDG) superfamily. UNG family.

It is found in the cytoplasm. The enzyme catalyses Hydrolyzes single-stranded DNA or mismatched double-stranded DNA and polynucleotides, releasing free uracil.. Excises uracil residues from the DNA which can arise as a result of misincorporation of dUMP residues by DNA polymerase or due to deamination of cytosine. The polypeptide is Uracil-DNA glycosylase (Bacillus cereus (strain B4264)).